We begin with the raw amino-acid sequence, 319 residues long: RWD domain-containing protein 2B (319 aa).

The region spanning 41–165 is the RWD domain; that stretch reads SELDLLASMF…EWVREHASGY (125 aa). Serine 275 bears the Phosphoserine mark.

In Pongo abelii (Sumatran orangutan), this protein is RWD domain-containing protein 2B (RWDD2B).